The sequence spans 549 residues: MGRGSVTSLAPGFRFHPTDEELVRYYLKRKICNKPFKFDAISVTDVYKSEPWDLPDKSRLKSRDLEWYFFSMLDKKYRNGSKTNRATEMGYWKTTGKDREILNGSKVVGMKKTLVYHKGRAPRGERTNWVMHEYRLVDQDLDKTGVHQDAFVLCRIFQKSGSGPKNGEQYGAPFVEEEWEEEDDMTFVPDQEDLGSEDHVYVHMDDIDQKSENFVVYDAIPIPLNFIHGESSNNVETNYSDSINYIQQTGNYMDSGGYFEQPAESYEKDQKPIIRDRDGSLQNEGIGCGVQDKHSETLQSSDNIFGTDTSCYNDFPVESNYLIGEAFLDPNSNLLENDGLYLETNDLSSTQQDGFDFEDYLTFFDETFDPSQLMGNEDVFFDQEELFQEVETKELEKEETSRSKHVVEEKEKDEASCSKQVDADATEFEPDYKYPLLKKASHMLGAIPAPLANASEFPTKDAAIRLHAAQSSGSVHVTAGMITISDSNMGWSYGKNENLDLILSLGLVQGNTAPEKSGNSSAWAMLIFMCFWVLLLSVSFKVSILVSSR.

Residues 9-159 form the NAC domain; that stretch reads LAPGFRFHPT…AFVLCRIFQK (151 aa). The DNA-binding element occupies 108–165; it reads VGMKKTLVYHKGRAPRGERTNWVMHEYRLVDQDLDKTGVHQDAFVLCRIFQKSGSGPK. Basic and acidic residues predominate over residues 395-416; the sequence is LEKEETSRSKHVVEEKEKDEAS. Residues 395–418 form a disordered region; it reads LEKEETSRSKHVVEEKEKDEASCS. A helical transmembrane segment spans residues 526–546; that stretch reads LIFMCFWVLLLSVSFKVSILV.

Expressed in roots, rosette leaves, cauline leaves, shoot apex and stems.

The protein localises to the endoplasmic reticulum membrane. The protein resides in the nucleus. In terms of biological role, transcriptional activator activated by proteolytic cleavage through regulated intramembrane proteolysis (RIP). Promotes reactive oxygen species (ROS) production during drought-induced leaf senescence. In response to abscisic acid (ABA)-mediated drought stress signals, binds directly to the promoters of RBOHC and RBOHE genes, encoding ROS biosynthetic enzymes, resulting in ROS accumulation and triggering leaf senescence via programmed cell death (PCD). ROS-induced leaf senescence sustains plant survival under drought conditions. Involved in heat stress response. Modulates PCD through a ROS-mediated positive feedback control under heat stress conditions. This may provide an adaptation strategy for plant survival under extreme heat stress conditions. Acts as a repressor in preventing anther dehiscence during stamen development by suppressing genes that participate in jasmonic acid (JA) biosynthesis, such as DAD1, AOS, AOC3, OPR3 and 4CLL5/OPCL1. The protein is NAC domain-containing protein 53 of Arabidopsis thaliana (Mouse-ear cress).